Reading from the N-terminus, the 251-residue chain is tRNA (guanine-N(7)-)-methyltransferase (251 aa).

A disordered region spans residues M1–S43. A compositionally biased stretch (basic residues) spans P29–G40. 4 residues coordinate S-adenosyl-L-methionine: E82, E107, D134, and D157. D157 is a catalytic residue. K161 contacts substrate. An interaction with RNA region spans residues R163–R168. Residues D193 and T228–E231 each bind substrate.

The protein belongs to the class I-like SAM-binding methyltransferase superfamily. TrmB family.

It carries out the reaction guanosine(46) in tRNA + S-adenosyl-L-methionine = N(7)-methylguanosine(46) in tRNA + S-adenosyl-L-homocysteine. The protein operates within tRNA modification; N(7)-methylguanine-tRNA biosynthesis. In terms of biological role, catalyzes the formation of N(7)-methylguanine at position 46 (m7G46) in tRNA. The polypeptide is tRNA (guanine-N(7)-)-methyltransferase (Ralstonia nicotianae (strain ATCC BAA-1114 / GMI1000) (Ralstonia solanacearum)).